A 93-amino-acid chain; its full sequence is N-acetyl-S-hydroxy-L-cysteine reductase (93 aa).

In terms of domain architecture, Glutaredoxin spans 1–93 (MSDVVNIVVW…NHAQIKEAKR (93 aa)). Residues Cys-15 and Cys-18 are joined by a disulfide bond.

Belongs to the glutaredoxin family.

The enzyme catalyses N-acetyl-S-hydroxy-L-cysteine + AH2 = N-acetyl-L-cysteine + A + H2O. It participates in amino-acid metabolism. Its function is as follows. Involved in a cysteine salvage pathway from S-alkylcysteine. Catalyzes the reduction of N-acetyl-S-hydroxy-L-cysteine (N-acetyl-L-cysteine sulfenic acid) to N-acetyl-L-cysteine. This pathway is likely important in the catabolism of alkylated cysteine generated by proteolysis of alkylated glutathione formed in the detoxification of a wide range of electrophiles. This is N-acetyl-S-hydroxy-L-cysteine reductase from Bacillus subtilis (strain 168).